Here is a 357-residue protein sequence, read N- to C-terminus: Protein RecA (357 aa).

71-78 (GPESSGKT) contributes to the ATP binding site.

This sequence belongs to the RecA family.

The protein resides in the cytoplasm. Functionally, can catalyze the hydrolysis of ATP in the presence of single-stranded DNA, the ATP-dependent uptake of single-stranded DNA by duplex DNA, and the ATP-dependent hybridization of homologous single-stranded DNAs. It interacts with LexA causing its activation and leading to its autocatalytic cleavage. The protein is Protein RecA of Ehrlichia chaffeensis (strain ATCC CRL-10679 / Arkansas).